Consider the following 353-residue polypeptide: MNGTEGPYFYVPMVNTSGIVRSPYEYPQYYLVNPAAYAALGAYMFLLILVGFPINFLTLYVTIEHKKLRTPLNYILLNLAVADLFMVFGGFTTTMYTSMHGYFVLGRLGCNIEGFFATLGGEIALWSLVVLAIERWVVVCKPISNFRFGENHAIMGLAFTWLMAMACAAPPLVGWSRYIPEGMQCSCGIDYYTRAEGFNNESFVIYMFVCHFLIPLMVVFFCYGRLLCAVKEAAAAQQESETTQRAEREVTRMVVIMVIAFLICWCPYAGVAWWIFTHQGSDFGPVFMTIPAFFAKSSSIYNPMIYICLNKQFRHCMITTLCCGKNPFEEEEGASTASKTEASSVSSSSVSPA.

Residues M1 to A36 lie on the Extracellular side of the membrane. 2 N-linked (GlcNAc...) asparagine glycosylation sites follow: N2 and N15. A helical transmembrane segment spans residues Y37–V61. The Cytoplasmic segment spans residues T62–N73. The chain crosses the membrane as a helical span at residues Y74 to Y96. Topologically, residues T97–C110 are extracellular. C110 and C187 form a disulfide bridge. Residues N111 to I133 form a helical membrane-spanning segment. Positions E134–W136 match the 'Ionic lock' involved in activated form stabilization motif. Over E134–H152 the chain is Cytoplasmic. Residues A153–V173 form a helical membrane-spanning segment. Topologically, residues G174–S202 are extracellular. N-linked (GlcNAc...) asparagine glycosylation is present at N200. A helical membrane pass occupies residues F203–G224. Residues R225 to R252 lie on the Cytoplasmic side of the membrane. A helical transmembrane segment spans residues M253 to W274. Topologically, residues I275–V286 are extracellular. A helical membrane pass occupies residues F287–C308. K296 carries the post-translational modification N6-(retinylidene)lysine. At L309–A353 the chain is on the cytoplasmic side. 2 S-palmitoyl cysteine lipidation sites follow: C322 and C323. The segment at E331 to A353 is disordered. A compositionally biased stretch (low complexity) spans A334–A353.

This sequence belongs to the G-protein coupled receptor 1 family. Opsin subfamily. Phosphorylated on some or all of the serine and threonine residues present in the C-terminal region. In terms of processing, contains one covalently linked retinal chromophore.

It localises to the membrane. The protein localises to the cell projection. It is found in the cilium. Its subcellular location is the photoreceptor outer segment. Functionally, photoreceptor required for image-forming vision at low light intensity. While most salt water fish species use retinal as chromophore, most freshwater fish use 3-dehydroretinal, or a mixture of retinal and 3-dehydroretinal. Light-induced isomerization of 11-cis to all-trans retinal triggers a conformational change that activates signaling via G-proteins. Subsequent receptor phosphorylation mediates displacement of the bound G-protein alpha subunit by arrestin and terminates signaling. In Lithognathus mormyrus (Striped seabream), this protein is Rhodopsin (rho).